The following is a 117-amino-acid chain: MNIFNYTTLIFRRLSSTFKASNKASIEWKKQNIAVKRKIGGYWNPKKKLPLESMDEIRRLKKEKSSMSCSELAKLYGVSPESIRRILKSSNRPLDDREKSRKEKRWLNSLKSNRDFA.

The N-terminal 46 residues, 1–46 (MNIFNYTTLIFRRLSSTFKASNKASIEWKKQNIAVKRKIGGYWNPK), are a transit peptide targeting the mitochondrion. Positions 89-117 (SSNRPLDDREKSRKEKRWLNSLKSNRDFA) are disordered.

The protein belongs to the RRG9 family.

It localises to the mitochondrion. Its subcellular location is the cytoplasm. The protein resides in the nucleus. Required for respiratory activity and maintenance and expression of the mitochondrial genome. The polypeptide is Required for respiratory growth protein 9, mitochondrial (rrg9) (Schizosaccharomyces pombe (strain 972 / ATCC 24843) (Fission yeast)).